Reading from the N-terminus, the 194-residue chain is MKLSLFIIAVLMPVILLSACSDHAEEHASINTKKTVENITDVRKTAKTSIDWTKPSGGEYPDIKQKHVWIDVNVKEQKAYIKEGSNTIYTMMISSGLDQTKDDATPKGTFYVEPERGEWFFSEGYQEGAEYWVSWKNHGEFLFHSVPMTKDQKVIKTEAEKLGTKASHGCIRLTIPDAKWVYENIPEHTKVVIS.

An N-terminal signal peptide occupies residues 1–19 (MKLSLFIIAVLMPVILLSA). The N-palmitoyl cysteine moiety is linked to residue Cys20. Cys20 carries S-diacylglycerol cysteine lipidation. The L,D-TPase catalytic domain maps to 68-194 (VWIDVNVKEQ…IPEHTKVVIS (127 aa)). The active-site Proton donor/acceptor is the His144. The active-site Nucleophile is Cys170.

This sequence belongs to the YkuD family.

The protein localises to the cell membrane. It participates in cell wall biogenesis; peptidoglycan biosynthesis. The protein is Putative L,D-transpeptidase YciB (yciB) of Bacillus subtilis (strain 168).